The following is a 388-amino-acid chain: MAQNPLSKPTACLVLADGTVFYGTGFGATGQTVAELCFNTAMTGYQEIMTDPSYAGQIVTFTFPHIGNVGVTPEDDETTDPVAAGMVVKWDPTAASNWRAAEELKGWLARRGRIAIGGVDTRRLTRAIRQQGAPHVALAHDPEGKFDLAALIAAARGFAGLEGMDLAKDVTCAQSYRWDEMRWAWPEGYARQEAPKHKVVAIDYGAKRNILRCLASSGCDVTVLPATATAAEVLAHAPDGVFLSNGPGDPAATGEYAVPMIREILDTTSLPVFGICLGHQMLALALGGRTVKMNHGHHGANHPVKDLETGKVEITSMNHGFAVDAQSLPEGVVETHRSLFDGSNCGIRMSERPVFSVQYHPEASPGPQDSFYLFERFAAAMDAQKAEV.

Residues 1–194 form a CPSase region; it reads MAQNPLSKPT…WPEGYARQEA (194 aa). L-glutamine is bound by residues Ser53, Gly246, and Gly248. Residues 198–387 enclose the Glutamine amidotransferase type-1 domain; it reads KVVAIDYGAK…AAAMDAQKAE (190 aa). Cys276 acts as the Nucleophile in catalysis. Residues Leu277, Gln280, Asn318, Gly320, and Phe321 each coordinate L-glutamine. Active-site residues include His360 and Glu362.

The protein belongs to the CarA family. In terms of assembly, composed of two chains; the small (or glutamine) chain promotes the hydrolysis of glutamine to ammonia, which is used by the large (or ammonia) chain to synthesize carbamoyl phosphate. Tetramer of heterodimers (alpha,beta)4.

It carries out the reaction hydrogencarbonate + L-glutamine + 2 ATP + H2O = carbamoyl phosphate + L-glutamate + 2 ADP + phosphate + 2 H(+). The catalysed reaction is L-glutamine + H2O = L-glutamate + NH4(+). It functions in the pathway amino-acid biosynthesis; L-arginine biosynthesis; carbamoyl phosphate from bicarbonate: step 1/1. It participates in pyrimidine metabolism; UMP biosynthesis via de novo pathway; (S)-dihydroorotate from bicarbonate: step 1/3. Functionally, small subunit of the glutamine-dependent carbamoyl phosphate synthetase (CPSase). CPSase catalyzes the formation of carbamoyl phosphate from the ammonia moiety of glutamine, carbonate, and phosphate donated by ATP, constituting the first step of 2 biosynthetic pathways, one leading to arginine and/or urea and the other to pyrimidine nucleotides. The small subunit (glutamine amidotransferase) binds and cleaves glutamine to supply the large subunit with the substrate ammonia. The sequence is that of Carbamoyl phosphate synthase small chain from Ruegeria pomeroyi (strain ATCC 700808 / DSM 15171 / DSS-3) (Silicibacter pomeroyi).